Here is a 453-residue protein sequence, read N- to C-terminus: Bifunctional protein GlmU (453 aa).

A pyrophosphorylase region spans residues 1-226 (MAFSVVILAA…EIEVEGINNR (226 aa)). UDP-N-acetyl-alpha-D-glucosamine-binding positions include 8–11 (LAAG), Lys22, Gln73, and 78–79 (GT). Asp102 serves as a coordination point for Mg(2+). UDP-N-acetyl-alpha-D-glucosamine contacts are provided by Gly137, Glu151, Asn166, and Asn224. A Mg(2+)-binding site is contributed by Asn224. Residues 227–247 (KQLAAIERAFQFEQAQELMMQ) are linker. An N-acetyltransferase region spans residues 248 to 453 (GVSLLDPHRF…SGWQRPTKPE (206 aa)). The UDP-N-acetyl-alpha-D-glucosamine site is built by Arg330 and Lys348. His360 (proton acceptor) is an active-site residue. Residues Tyr363 and Asn374 each contribute to the UDP-N-acetyl-alpha-D-glucosamine site. Acetyl-CoA-binding positions include Ala377, 383-384 (NY), Ser402, Ala420, and Arg437.

This sequence in the N-terminal section; belongs to the N-acetylglucosamine-1-phosphate uridyltransferase family. In the C-terminal section; belongs to the transferase hexapeptide repeat family. Homotrimer. It depends on Mg(2+) as a cofactor.

The protein localises to the cytoplasm. It catalyses the reaction alpha-D-glucosamine 1-phosphate + acetyl-CoA = N-acetyl-alpha-D-glucosamine 1-phosphate + CoA + H(+). It carries out the reaction N-acetyl-alpha-D-glucosamine 1-phosphate + UTP + H(+) = UDP-N-acetyl-alpha-D-glucosamine + diphosphate. It participates in nucleotide-sugar biosynthesis; UDP-N-acetyl-alpha-D-glucosamine biosynthesis; N-acetyl-alpha-D-glucosamine 1-phosphate from alpha-D-glucosamine 6-phosphate (route II): step 2/2. Its pathway is nucleotide-sugar biosynthesis; UDP-N-acetyl-alpha-D-glucosamine biosynthesis; UDP-N-acetyl-alpha-D-glucosamine from N-acetyl-alpha-D-glucosamine 1-phosphate: step 1/1. It functions in the pathway bacterial outer membrane biogenesis; LPS lipid A biosynthesis. Catalyzes the last two sequential reactions in the de novo biosynthetic pathway for UDP-N-acetylglucosamine (UDP-GlcNAc). The C-terminal domain catalyzes the transfer of acetyl group from acetyl coenzyme A to glucosamine-1-phosphate (GlcN-1-P) to produce N-acetylglucosamine-1-phosphate (GlcNAc-1-P), which is converted into UDP-GlcNAc by the transfer of uridine 5-monophosphate (from uridine 5-triphosphate), a reaction catalyzed by the N-terminal domain. The sequence is that of Bifunctional protein GlmU from Pseudoalteromonas atlantica (strain T6c / ATCC BAA-1087).